A 500-amino-acid chain; its full sequence is Beta-glucosidase 28 (500 aa).

Residues methionine 1 to glycine 24 form the signal peptide. Glutamine 45 contributes to the a beta-D-glucoside binding site. N-linked (GlcNAc...) asparagine glycosylation occurs at asparagine 111. Residues histidine 146 and asparagine 191–glutamate 192 each bind a beta-D-glucoside. Residue glutamate 192 is the Proton donor of the active site. Residues cysteine 211 and cysteine 219 are joined by a disulfide bond. Tyrosine 337 provides a ligand contact to a beta-D-glucoside. A glycan (N-linked (GlcNAc...) asparagine) is linked at asparagine 362. Glutamate 408 provides a ligand contact to a beta-D-glucoside. Glutamate 408 acts as the Nucleophile in catalysis. Asparagine 409, asparagine 415, and asparagine 416 each carry an N-linked (GlcNAc...) asparagine glycan. Residues tryptophan 457, glutamate 464–phenylalanine 465, and phenylalanine 473 each bind a beta-D-glucoside.

This sequence belongs to the glycosyl hydrolase 1 family.

The catalysed reaction is Hydrolysis of terminal, non-reducing beta-D-glucosyl residues with release of beta-D-glucose.. The polypeptide is Beta-glucosidase 28 (BGLU28) (Oryza sativa subsp. japonica (Rice)).